The chain runs to 370 residues: Histidinol-phosphate aminotransferase 2 (370 aa).

At Lys-230 the chain carries N6-(pyridoxal phosphate)lysine.

This sequence belongs to the class-II pyridoxal-phosphate-dependent aminotransferase family. Histidinol-phosphate aminotransferase subfamily. In terms of assembly, homodimer. Pyridoxal 5'-phosphate serves as cofactor.

The enzyme catalyses L-histidinol phosphate + 2-oxoglutarate = 3-(imidazol-4-yl)-2-oxopropyl phosphate + L-glutamate. It functions in the pathway amino-acid biosynthesis; L-histidine biosynthesis; L-histidine from 5-phospho-alpha-D-ribose 1-diphosphate: step 7/9. The chain is Histidinol-phosphate aminotransferase 2 from Pseudomonas fluorescens (strain Pf0-1).